Here is a 490-residue protein sequence, read N- to C-terminus: Phosphoethanolamine N-methyltransferase 3 (490 aa).

S-adenosyl-L-homocysteine is bound by residues glycine 60, arginine 65, aspartate 81, aspartate 106, valine 107, and asparagine 125. 5 residues coordinate phosphocholine: serine 158, serine 163, glycine 164, arginine 168, and tyrosine 175. Residues 244-245 (QY) and tyrosine 253 each bind N-methylethanolamine phosphate. Tyrosine 253 lines the phosphocholine pocket. 7 residues coordinate S-adenosyl-L-homocysteine: valine 262, serine 263, glycine 289, aspartate 311, aspartate 337, cysteine 338, and arginine 354. Phosphocholine is bound by residues tyrosine 385, tyrosine 399, arginine 403, tyrosine 405, and lysine 471. N-methylethanolamine phosphate contacts are provided by residues tyrosine 385, tyrosine 399, 403–405 (RGY), and lysine 471.

This sequence belongs to the class I-like SAM-binding methyltransferase superfamily. PEAMT family. In terms of tissue distribution, expressed in root vasculature, shoots, rosettes leaves, cauline leaves, sepals, petals, anther filaments and ovules. Highly expressed in leaf vasculature.

The protein localises to the cytoplasm. It carries out the reaction phosphoethanolamine + S-adenosyl-L-methionine = N-methylethanolamine phosphate + S-adenosyl-L-homocysteine + H(+). It catalyses the reaction N-methylethanolamine phosphate + S-adenosyl-L-methionine = N,N-dimethylethanolamine phosphate + S-adenosyl-L-homocysteine + H(+). The enzyme catalyses N,N-dimethylethanolamine phosphate + S-adenosyl-L-methionine = phosphocholine + S-adenosyl-L-homocysteine + H(+). Its pathway is phospholipid metabolism; phosphatidylcholine biosynthesis; phosphocholine from phosphoethanolamine: step 1/1. Involved in phosphocholine biosynthesis. Catalyzes the N-methylation of phosphoethanolamine, phosphomonomethylethanolamine and phosphodimethylethanolamine, the three methylation steps required to convert phosphoethanolamine to phosphocholine (PC). In association with NMT1, regulates PC homeostasis, phase transition at the shoot apex, coordinated organ development, and fertility. In associtation with NMT1, involved in phosphatidylcholine biosynthesis and vascular development. The protein is Phosphoethanolamine N-methyltransferase 3 of Arabidopsis thaliana (Mouse-ear cress).